Reading from the N-terminus, the 182-residue chain is PTS system glucitol/sorbitol-specific EIIC component (182 aa).

Residues Met1–Asn182 enclose the PTS EIIC type-5 domain. Transmembrane regions (helical) follow at residues Gly28–Gly48, Val63–Ala83, and Thr139–Val159.

It is found in the cell membrane. Its function is as follows. The phosphoenolpyruvate-dependent sugar phosphotransferase system (PTS), a major carbohydrate active transport system, catalyzes the phosphorylation of incoming sugar substrates concomitant with their translocation across the cell membrane. The enzyme II complex composed of SrlA, SrlB and SrlE is involved in glucitol/sorbitol transport. The sequence is that of PTS system glucitol/sorbitol-specific EIIC component (srlA) from Clostridium beijerinckii (strain ATCC 51743 / NCIMB 8052) (Clostridium acetobutylicum).